The following is a 112-amino-acid chain: uncharacterized protein (112 aa).

Transmembrane regions (helical) follow at residues 7-26 (PSFHFFIFFFLFCLLRTLDY) and 36-58 (TYMHIKLFFSYYFRFVHLFFFLY).

It is found in the membrane. This is an uncharacterized protein from Saccharomyces cerevisiae (strain ATCC 204508 / S288c) (Baker's yeast).